Reading from the N-terminus, the 834-residue chain is DNA gyrase subunit A (834 aa).

The Topo IIA-type catalytic domain maps to 53 to 520 (LPDVRDGLKP…NDTEIDEEDL (468 aa)). Tyrosine 141 acts as the O-(5'-phospho-DNA)-tyrosine intermediate in catalysis. Positions 547–553 (QGRGGVG) match the GyrA-box motif.

The protein belongs to the type II topoisomerase GyrA/ParC subunit family. As to quaternary structure, heterotetramer, composed of two GyrA and two GyrB chains. In the heterotetramer, GyrA contains the active site tyrosine that forms a transient covalent intermediate with DNA, while GyrB binds cofactors and catalyzes ATP hydrolysis.

Its subcellular location is the cytoplasm. The catalysed reaction is ATP-dependent breakage, passage and rejoining of double-stranded DNA.. In terms of biological role, a type II topoisomerase that negatively supercoils closed circular double-stranded (ds) DNA in an ATP-dependent manner to modulate DNA topology and maintain chromosomes in an underwound state. Negative supercoiling favors strand separation, and DNA replication, transcription, recombination and repair, all of which involve strand separation. Also able to catalyze the interconversion of other topological isomers of dsDNA rings, including catenanes and knotted rings. Type II topoisomerases break and join 2 DNA strands simultaneously in an ATP-dependent manner. In Brachyspira hyodysenteriae (strain ATCC 49526 / WA1), this protein is DNA gyrase subunit A.